We begin with the raw amino-acid sequence, 327 residues long: tRNA uridine(34) hydroxylase (327 aa).

Residues 122-218 (QENRCLVLDV…YGLKMGTGKW (97 aa)) form the Rhodanese domain. Residue Cys-178 is the Cysteine persulfide intermediate of the active site.

The protein belongs to the TrhO family.

The catalysed reaction is uridine(34) in tRNA + AH2 + O2 = 5-hydroxyuridine(34) in tRNA + A + H2O. Functionally, catalyzes oxygen-dependent 5-hydroxyuridine (ho5U) modification at position 34 in tRNAs. The polypeptide is tRNA uridine(34) hydroxylase (Chlamydia trachomatis serovar A (strain ATCC VR-571B / DSM 19440 / HAR-13)).